Reading from the N-terminus, the 71-residue chain is Mitochondrial import protein 1 (71 aa).

A helical membrane pass occupies residues 22–44 (YAAINLGLPFLNGVMLGFGEIFA).

It belongs to the MIM1 family. As to quaternary structure, component of the mitochondrial outer import machinery (MIM) complex containing at least mim1 and mim2. Interacts with mim2. Interacts with mitophagy receptor atg43.

The protein localises to the mitochondrion outer membrane. Its function is as follows. Component of the mitochondrial outer import machinery (MIM) complex that mediates transport of proteins into mitochondrial compartments. Promotes the insertion of tom70 into the outer mitochondrial membrane. Promotes the insertion of atg43 into the outer mitochondrial membrane. The MIM complex cooperates with the receptor tom70 in binding of precursor proteins and promotes their insertion and assembly into the outer membrane. Involved in import of the subset of proteins with multiple alpha-helical transmembrane segments. Required for the assembly of the TOM (translocase of outer membrane) receptor complex, which is responsible for the recognition and translocation of cytosolically synthesized mitochondrial preproteins. The protein is Mitochondrial import protein 1 of Schizosaccharomyces pombe (strain 972 / ATCC 24843) (Fission yeast).